Here is a 187-residue protein sequence, read N- to C-terminus: Large ribosomal subunit protein uL22 (187 aa).

Belongs to the universal ribosomal protein uL22 family.

The sequence is that of Large ribosomal subunit protein uL22 (RPL17) from Theileria parva (East coast fever infection agent).